Here is a 98-residue protein sequence, read N- to C-terminus: Keratin, high sulfur matrix protein, IIIB3 (98 aa).

Ala1 is subject to N-acetylalanine.

It belongs to the KRTAP type 3 family. As to quaternary structure, interacts with wool keratins. In terms of tissue distribution, wool.

In terms of biological role, in the wool cortex, wool keratin intermediate filaments are embedded in an interfilamentous matrix, consisting of hair keratin-associated proteins (KRTAP), which are essential for the formation of a rigid and resistant wool shaft through their extensive disulfide bond cross-linking with abundant cysteine residues of wool keratins. The matrix proteins include the high-sulfur and high-glycine-tyrosine keratins. The chain is Keratin, high sulfur matrix protein, IIIB3 from Ovis aries (Sheep).